The sequence spans 541 residues: Protein wntless homolog A (541 aa).

The N-terminal stretch at 1 to 28 (MAGAIIENMSTKKLCMVGVALLLLQVLA) is a signal peptide. At 29 to 232 (FLVGGLIAPK…SIFQNGGFTM (204 aa)) the chain is on the lumenal side. A helical transmembrane segment spans residues 233-253 (VWFAMKTFLTPSIIIIMIWYW). Residues 254-268 (RRITMMTRSPVLLEK) are Cytoplasmic-facing. A helical transmembrane segment spans residues 269–289 (VIFALGFSMTFINIPVEWFSI). The Lumenal segment spans residues 290-303 (GYDWTWMLLFGDIR). A helical transmembrane segment spans residues 304–324 (QGIFYAMLLSFWIIFCGEHMM). Residues 325 to 331 (DQTERNR) lie on the Cytoplasmic side of the membrane. A helical membrane pass occupies residues 332–352 (ISVYWKQVGPIAFGSCCLFIF). The Lumenal segment spans residues 353-379 (DMCERGVQLKNPFYSIWTTDVGAEIAM). A helical membrane pass occupies residues 380-400 (AFIIVAGICACLYFLFLCFMV). The Cytoplasmic portion of the chain corresponds to 401–431 (YQVFRNISGKQSNLPAMTKARRLHYEGLIFR). The chain crosses the membrane as a helical span at residues 432 to 452 (FKFLMIITLACAALTIVFFIT). At 453–471 (TQITEGNWKLGDLSIELNS) the chain is on the lumenal side. A helical transmembrane segment spans residues 472 to 492 (AFFTGVYGMWNLYVFALMFLY). Residues 493 to 541 (APSHKHYGDGQSNDGAGMSSGEELQLTTTITHIDGPTEVYRLAGKEAQE) lie on the Cytoplasmic side of the membrane.

It belongs to the wntless family.

It is found in the golgi apparatus membrane. It localises to the cytoplasmic vesicle membrane. In terms of biological role, required for a subset of Wnt-dependent developmental processes, in particular, eye and pronephros development. Regulates the secretion of wnt4, which is required for eye development. The protein is Protein wntless homolog A (wls-a) of Xenopus laevis (African clawed frog).